The sequence spans 206 residues: Large ribosomal subunit protein uL4 (206 aa).

The disordered stretch occupies residues 44–77; that stretch reads RQGTRAQKDRQTVKHSTKKPWRQKGTGRARAGMT. Over residues 56-70 the composition is skewed to basic residues; the sequence is VKHSTKKPWRQKGTG.

Belongs to the universal ribosomal protein uL4 family. In terms of assembly, part of the 50S ribosomal subunit.

Functionally, one of the primary rRNA binding proteins, this protein initially binds near the 5'-end of the 23S rRNA. It is important during the early stages of 50S assembly. It makes multiple contacts with different domains of the 23S rRNA in the assembled 50S subunit and ribosome. Its function is as follows. Forms part of the polypeptide exit tunnel. This is Large ribosomal subunit protein uL4 from Methylibium petroleiphilum (strain ATCC BAA-1232 / LMG 22953 / PM1).